A 234-amino-acid polypeptide reads, in one-letter code: Uridylate kinase (234 aa).

ATP-binding positions include 8–11, Gly51, and Arg55; that span reads KLSG. Residues Asp68 and 129–136 contribute to the UMP site; that span reads TSNPFFTT. 3 residues coordinate ATP: Thr156, Tyr162, and Asp165.

The protein belongs to the UMP kinase family. In terms of assembly, homohexamer.

It localises to the cytoplasm. It catalyses the reaction UMP + ATP = UDP + ADP. Its pathway is pyrimidine metabolism; CTP biosynthesis via de novo pathway; UDP from UMP (UMPK route): step 1/1. With respect to regulation, inhibited by UTP. Its function is as follows. Catalyzes the reversible phosphorylation of UMP to UDP. This chain is Uridylate kinase, found in Fervidobacterium nodosum (strain ATCC 35602 / DSM 5306 / Rt17-B1).